Here is a 384-residue protein sequence, read N- to C-terminus: S-adenosylmethionine synthase (384 aa).

ATP is bound at residue H15. Mg(2+) is bound at residue D17. Position 43 (E43) interacts with K(+). L-methionine contacts are provided by E56 and Q99. A flexible loop region spans residues 99-109 (QSADINQGVDR). ATP is bound by residues 164-166 (DAK), 230-231 (RF), D239, 245-246 (RK), A262, and K266. Residue D239 coordinates L-methionine. Residue K270 participates in L-methionine binding.

It belongs to the AdoMet synthase family. Homotetramer; dimer of dimers. Mg(2+) serves as cofactor. K(+) is required as a cofactor.

Its subcellular location is the cytoplasm. It catalyses the reaction L-methionine + ATP + H2O = S-adenosyl-L-methionine + phosphate + diphosphate. It participates in amino-acid biosynthesis; S-adenosyl-L-methionine biosynthesis; S-adenosyl-L-methionine from L-methionine: step 1/1. In terms of biological role, catalyzes the formation of S-adenosylmethionine (AdoMet) from methionine and ATP. The overall synthetic reaction is composed of two sequential steps, AdoMet formation and the subsequent tripolyphosphate hydrolysis which occurs prior to release of AdoMet from the enzyme. This chain is S-adenosylmethionine synthase, found in Haemophilus influenzae (strain PittEE).